The primary structure comprises 280 residues: Ribosomal RNA small subunit methyltransferase A (280 aa).

Residues His-15, Leu-17, Gly-42, Glu-64, Asp-89, and Asn-109 each contribute to the S-adenosyl-L-methionine site.

This sequence belongs to the class I-like SAM-binding methyltransferase superfamily. rRNA adenine N(6)-methyltransferase family. RsmA subfamily.

It localises to the cytoplasm. The enzyme catalyses adenosine(1518)/adenosine(1519) in 16S rRNA + 4 S-adenosyl-L-methionine = N(6)-dimethyladenosine(1518)/N(6)-dimethyladenosine(1519) in 16S rRNA + 4 S-adenosyl-L-homocysteine + 4 H(+). In terms of biological role, specifically dimethylates two adjacent adenosines (A1518 and A1519) in the loop of a conserved hairpin near the 3'-end of 16S rRNA in the 30S particle. May play a critical role in biogenesis of 30S subunits. The protein is Ribosomal RNA small subunit methyltransferase A of Prochlorococcus marinus (strain MIT 9313).